We begin with the raw amino-acid sequence, 789 residues long: Larval serum protein 1 beta chain (789 aa).

The N-terminal stretch at 1–16 is a signal peptide; sequence MKIAIALLACLGLAAA.

Belongs to the hemocyanin family. Heterohexamer, composed of three subunits, alpha, beta and gamma. Larval hemolymph.

It localises to the secreted. The protein localises to the extracellular space. Larval storage protein (LSP) which may serve as a store of amino acids for synthesis of adult proteins. In Drosophila melanogaster (Fruit fly), this protein is Larval serum protein 1 beta chain (Lsp1beta).